Reading from the N-terminus, the 104-residue chain is Phosphoribosyl-ATP pyrophosphatase (104 aa).

Belongs to the PRA-PH family.

It is found in the cytoplasm. It catalyses the reaction 1-(5-phospho-beta-D-ribosyl)-ATP + H2O = 1-(5-phospho-beta-D-ribosyl)-5'-AMP + diphosphate + H(+). It functions in the pathway amino-acid biosynthesis; L-histidine biosynthesis; L-histidine from 5-phospho-alpha-D-ribose 1-diphosphate: step 2/9. The polypeptide is Phosphoribosyl-ATP pyrophosphatase (Methanocorpusculum labreanum (strain ATCC 43576 / DSM 4855 / Z)).